A 331-amino-acid chain; its full sequence is Aldo-keto reductase YhdN (331 aa).

NADP(+)-binding positions include 20-21 (TW) and Asp-52. Residue Tyr-57 is the Proton donor of the active site. Residues Gln-175, 203-208 (YGSLCR), Lys-214, Arg-227, 280-282 (GAR), and Gln-286 contribute to the NADP(+) site.

This sequence belongs to the aldo/keto reductase family. Aldo/keto reductase 11 subfamily. Monomer.

Functionally, aldo-keto reductase (AKR) that displays broad substrate specificity in vitro. Is able to reduce the standard AKR substrates DL-glyceraldehyde, D-erythrose, methylglyoxal, p-nitrobenzaldehyde, benzaldehyde and butyraldehyde, in the presence of NADPH. Cannot use NADH as a cosubstrate. Does not act on glucose, 2-pyridine carboxyaldehyde, fructose and xylose. The physiological function of this enzyme is not clear. May play a role in bacterial stress response and/or in detoxification of reactive aldehydes. This Bacillus subtilis (strain 168) protein is Aldo-keto reductase YhdN (yhdN).